The chain runs to 192 residues: Fe/S biogenesis protein NfuA (192 aa).

2 residues coordinate [4Fe-4S] cluster: C150 and C153.

This sequence belongs to the NfuA family. Homodimer. The cofactor is [4Fe-4S] cluster.

Functionally, involved in iron-sulfur cluster biogenesis. Binds a 4Fe-4S cluster, can transfer this cluster to apoproteins, and thereby intervenes in the maturation of Fe/S proteins. Could also act as a scaffold/chaperone for damaged Fe/S proteins. This chain is Fe/S biogenesis protein NfuA, found in Ruthia magnifica subsp. Calyptogena magnifica.